Consider the following 232-residue polypeptide: ATP synthase subunit a (232 aa).

6 helical membrane passes run 18–38 (LLFI…IAFI), 74–94 (WAGL…LGLF), 107–127 (TYSL…YLAF), 142–162 (ALIP…PIAL), 173–193 (GHLL…SLMV), and 195–215 (SIPI…VACI).

Belongs to the ATPase A chain family. F-type ATPases have 2 components, CF(1) - the catalytic core - and CF(0) - the membrane proton channel. CF(1) has five subunits: alpha(3), beta(3), gamma(1), delta(1), epsilon(1). CF(0) has three main subunits: a, b and c.

The protein resides in the mitochondrion inner membrane. Mitochondrial membrane ATP synthase (F(1)F(0) ATP synthase or Complex V) produces ATP from ADP in the presence of a proton gradient across the membrane which is generated by electron transport complexes of the respiratory chain. F-type ATPases consist of two structural domains, F(1) - containing the extramembraneous catalytic core and F(0) - containing the membrane proton channel, linked together by a central stalk and a peripheral stalk. During catalysis, ATP synthesis in the catalytic domain of F(1) is coupled via a rotary mechanism of the central stalk subunits to proton translocation. Key component of the proton channel; it may play a direct role in the translocation of protons across the membrane. The sequence is that of ATP synthase subunit a (ATP6) from Paracentrotus lividus (Common sea urchin).